Reading from the N-terminus, the 321-residue chain is Glucokinase (321 aa).

Gly8–Thr13 lines the ATP pocket.

This sequence belongs to the bacterial glucokinase family.

It is found in the cytoplasm. The enzyme catalyses D-glucose + ATP = D-glucose 6-phosphate + ADP + H(+). This chain is Glucokinase, found in Klebsiella pneumoniae subsp. pneumoniae (strain ATCC 700721 / MGH 78578).